A 279-amino-acid chain; its full sequence is Large ribosomal subunit protein uL5c (279 aa).

Disordered stretches follow at residues 1–23 (MAAT…TASS) and 40–63 (LRVA…SPSG). The N-terminal 43 residues, 1–43 (MAATAVTLPSSPAPFPVTTTASSSRNVRLLLRSPPPRRALRVA), are a transit peptide targeting the chloroplast. Low complexity predominate over residues 41-50 (RVAASAAADA). The span at 51 to 60 (PPKPAPPPTS) shows a compositional bias: pro residues.

The protein belongs to the universal ribosomal protein uL5 family. Part of the 50S ribosomal subunit; contacts the 5S rRNA.

Its subcellular location is the plastid. It is found in the chloroplast. In terms of biological role, binds 5S rRNA, forms part of the central protuberance of the 50S subunit. The protein is Large ribosomal subunit protein uL5c (RPL5) of Oryza sativa subsp. japonica (Rice).